A 371-amino-acid chain; its full sequence is 4-hydroxy-3-methylbut-2-en-1-yl diphosphate synthase (flavodoxin) (371 aa).

Cysteine 270, cysteine 273, cysteine 305, and glutamate 312 together coordinate [4Fe-4S] cluster.

Belongs to the IspG family. The cofactor is [4Fe-4S] cluster.

The catalysed reaction is (2E)-4-hydroxy-3-methylbut-2-enyl diphosphate + oxidized [flavodoxin] + H2O + 2 H(+) = 2-C-methyl-D-erythritol 2,4-cyclic diphosphate + reduced [flavodoxin]. The protein operates within isoprenoid biosynthesis; isopentenyl diphosphate biosynthesis via DXP pathway; isopentenyl diphosphate from 1-deoxy-D-xylulose 5-phosphate: step 5/6. Its function is as follows. Converts 2C-methyl-D-erythritol 2,4-cyclodiphosphate (ME-2,4cPP) into 1-hydroxy-2-methyl-2-(E)-butenyl 4-diphosphate. This Shewanella frigidimarina (strain NCIMB 400) protein is 4-hydroxy-3-methylbut-2-en-1-yl diphosphate synthase (flavodoxin).